The primary structure comprises 362 residues: H-2 class I histocompatibility antigen, L-D alpha chain (362 aa).

Residues Met-1–Ala-24 form the signal peptide. Positions Gly-25 to Gly-114 are alpha-1. Residues Gly-25–Val-309 are Extracellular-facing. A glycan (N-linked (GlcNAc...) asparagine) is linked at Asn-110. Residues Gly-115–Thr-206 form an alpha-2 region. An intrachain disulfide couples Cys-125 to Cys-188. N-linked (GlcNAc...) asparagine glycosylation is found at Asn-200 and Asn-280. Positions Asp-207–Trp-298 are alpha-3. Residues Pro-209 to Arg-297 form the Ig-like C1-type domain. The cysteines at positions 227 and 283 are disulfide-linked. Residues Glu-299 to Val-309 are connecting peptide. Residues Ile-310 to Met-331 traverse the membrane as a helical segment. Residues Lys-332 to Ala-362 are Cytoplasmic-facing. The segment at Lys-340–Ala-362 is disordered. A phosphoserine mark is found at Ser-353 and Ser-356.

Belongs to the MHC class I family. Heterodimer of an alpha chain and a beta chain (beta-2-microglobulin).

The protein resides in the membrane. Its function is as follows. Involved in the presentation of foreign antigens to the immune system. The polypeptide is H-2 class I histocompatibility antigen, L-D alpha chain (H2-L) (Mus musculus (Mouse)).